A 945-amino-acid polypeptide reads, in one-letter code: Sensor kinase CckA (945 aa).

2 helical membrane passes run Ala-111–Phe-131 and Phe-139–Ala-159. 3 consecutive PAS domains span residues His-171–Asp-212, Leu-313–Gly-341, and Ala-432–Gln-505. A Histidine kinase domain is found at Gly-574–Ile-797. His-577 bears the Phosphohistidine; by autocatalysis mark. Residues Thr-825 to Leu-941 form the Response regulatory domain. Asp-876 bears the 4-aspartylphosphate mark.

The protein resides in the cell inner membrane. It catalyses the reaction ATP + protein L-histidine = ADP + protein N-phospho-L-histidine.. Its function is as follows. Component of a regulatory phosphorelay system that controls B.abortus cell growth, division, and intracellular survival inside mammalian host cells. This signaling pathway is composed of CckA, ChpT, CtrA and CpdR. CckA autophosphorylates in the presence of ATP on a conserved His residue and transfers a phosphoryl group to a conserved Asp residue on its C-terminal receiver domain. CckA-P transfers phosphoryl groups to the ChpT phosphotransferase. The sequence is that of Sensor kinase CckA from Brucella abortus (strain 2308).